Consider the following 191-residue polypeptide: Recombination protein RecR (191 aa).

A C4-type zinc finger spans residues 56-71; that stretch reads CQNCNFLQSNNICHFC. One can recognise a Toprim domain in the interval 78–170; that stretch reads KQLMIFETTS…KVTKLAQGLP (93 aa).

It belongs to the RecR family.

In terms of biological role, may play a role in DNA repair. It seems to be involved in an RecBC-independent recombinational process of DNA repair. It may act with RecF and RecO. This is Recombination protein RecR from Mycoplasmopsis pulmonis (strain UAB CTIP) (Mycoplasma pulmonis).